Here is an 838-residue protein sequence, read N- to C-terminus: AP-4 complex subunit beta (838 aa).

Positions 582 to 673 (NSSKQTTSIN…NQNNNQNNNQ (92 aa)) are hinge. The tract at residues 648 to 683 (ITDGNQNNNQNNNQNNNQNNNQNNNQNNQNNNNQNN) is disordered. The segment covering 652–683 (NQNNNQNNNQNNNQNNNQNNNQNNQNNNNQNN) has biased composition (low complexity). Residues 674–838 (NNQNNNNQNN…LSIPIPKIFN (165 aa)) are ear.

Belongs to the adaptor complexes large subunit family. May be part of the adaptor protein complex 4 (AP-4), a heterotetramer composed of two large adaptins (epsilon-type subunitand beta-type subunit), a medium adaptin (mu-type subunit) and a small adaptin (sigma-type).

It is found in the golgi apparatus. It localises to the trans-Golgi network membrane. Its function is as follows. Probable component of an adaptor protein complex. Adaptor protein complexes are vesicle coat components involved both in vesicle formation and cargo selection. They control the vesicular transport of proteins in different trafficking pathways. The protein is AP-4 complex subunit beta (ap4b1) of Dictyostelium discoideum (Social amoeba).